The following is a 103-amino-acid chain: Small ribosomal subunit protein uS10 (103 aa).

The protein belongs to the universal ribosomal protein uS10 family. Part of the 30S ribosomal subunit.

Functionally, involved in the binding of tRNA to the ribosomes. This Korarchaeum cryptofilum (strain OPF8) protein is Small ribosomal subunit protein uS10.